The sequence spans 135 residues: Transcription antitermination protein NusB (135 aa).

Belongs to the NusB family.

Its function is as follows. Involved in transcription antitermination. Required for transcription of ribosomal RNA (rRNA) genes. Binds specifically to the boxA antiterminator sequence of the ribosomal RNA (rrn) operons. The chain is Transcription antitermination protein NusB from Shewanella halifaxensis (strain HAW-EB4).